Consider the following 156-residue polypeptide: S-ribosylhomocysteine lyase (156 aa).

Residues histidine 56, histidine 60, and cysteine 123 each contribute to the Fe cation site.

Belongs to the LuxS family. Homodimer. It depends on Fe cation as a cofactor.

The catalysed reaction is S-(5-deoxy-D-ribos-5-yl)-L-homocysteine = (S)-4,5-dihydroxypentane-2,3-dione + L-homocysteine. Involved in the synthesis of autoinducer 2 (AI-2) which is secreted by bacteria and is used to communicate both the cell density and the metabolic potential of the environment. The regulation of gene expression in response to changes in cell density is called quorum sensing. Catalyzes the transformation of S-ribosylhomocysteine (RHC) to homocysteine (HC) and 4,5-dihydroxy-2,3-pentadione (DPD). The protein is S-ribosylhomocysteine lyase of Staphylococcus aureus (strain bovine RF122 / ET3-1).